We begin with the raw amino-acid sequence, 446 residues long: Na(+)-translocating NADH-quinone reductase subunit A (446 aa).

This sequence belongs to the NqrA family. In terms of assembly, composed of six subunits; NqrA, NqrB, NqrC, NqrD, NqrE and NqrF.

It carries out the reaction a ubiquinone + n Na(+)(in) + NADH + H(+) = a ubiquinol + n Na(+)(out) + NAD(+). Its function is as follows. NQR complex catalyzes the reduction of ubiquinone-1 to ubiquinol by two successive reactions, coupled with the transport of Na(+) ions from the cytoplasm to the periplasm. NqrA to NqrE are probably involved in the second step, the conversion of ubisemiquinone to ubiquinol. This is Na(+)-translocating NADH-quinone reductase subunit A from Vibrio parahaemolyticus serotype O3:K6 (strain RIMD 2210633).